The following is a 732-amino-acid chain: Aldehyde oxidoreductase molybdenum-binding subunit PaoC (732 aa).

Residues 241–242, 468–470, 511–512, 615–621, Gln-625, and 688–691 contribute to the Mo-molybdopterin cytosine dinucleotide site; these read GF, IGT, GA, RILNPKT, and KGVG. The active-site Proton acceptor is the Glu-692.

This sequence belongs to the xanthine dehydrogenase family. Heterotrimer composed of PaoA, PaoB and PaoC. Mo-molybdopterin cytosine dinucleotide is required as a cofactor.

It is found in the periplasm. The catalysed reaction is an aldehyde + A + H2O = a carboxylate + AH2 + H(+). Functionally, oxidizes aldehydes to the corresponding carboxylic acids with a preference for aromatic aldehydes. It might play a role in the detoxification of aldehydes to avoid cell damage. In Escherichia coli O157:H7, this protein is Aldehyde oxidoreductase molybdenum-binding subunit PaoC.